The sequence spans 324 residues: MSGLLQLDEESLYDHIFERYTLLTSNNDSLKQDLGIVDRTVSKITIDIDQFDFNNKKSNNDFYSIEINQPITSLNSSSVNNNSTTGYVVWSTTPFFTRWLIFHSNASIFRNGGSIELIDQDDELKLPPMFSNSVGLLELGSGIAGILPVTLGNFVGSFIATDQIGILSTLKTNILENLSQLNRKIVTSRSLNLNLDVDESTLLKRSLLSLECLPLDWELFDIKDTTKLDPALLSLFKEKETIYVLAMDVIYNEYLIESFLSTIQNLKSLAFKFNVNLNCLIGIQLRSEEVTTLFLEKAIIDYEMKVYYIQDNILESSRFSIYMI.

Residues Trp90, 140–142, Asp162, Trp217, and Met247 each bind S-adenosyl-L-methionine; that span reads GSG.

This sequence belongs to the class I-like SAM-binding methyltransferase superfamily. RKM5 family.

In terms of biological role, S-adenosyl-L-methionine-dependent protein-lysine N-methyltransferase that methylates 60S ribosomal protein L1. This chain is Ribosomal lysine N-methyltransferase 5 (RKM5), found in Vanderwaltozyma polyspora (strain ATCC 22028 / DSM 70294 / BCRC 21397 / CBS 2163 / NBRC 10782 / NRRL Y-8283 / UCD 57-17) (Kluyveromyces polysporus).